The chain runs to 127 residues: Large ribosomal subunit protein bL17 (127 aa).

The protein belongs to the bacterial ribosomal protein bL17 family. Part of the 50S ribosomal subunit. Contacts protein L32.

The protein is Large ribosomal subunit protein bL17 of Xanthomonas campestris pv. campestris (strain 8004).